We begin with the raw amino-acid sequence, 735 residues long: Catalase-peroxidase (735 aa).

The segment covering 1–10 (MMDGAQTNSG) has biased composition (polar residues). Residues 1–20 (MMDGAQTNSGGCPVMHGGGS) are disordered. A cross-link (tryptophyl-tyrosyl-methioninium (Trp-Tyr) (with M-254)) is located at residues 100–228 (WHSAGTYRTY…LAAVQMGLIY (129 aa)). His-101 functions as the Proton acceptor in the catalytic mechanism. Residues 228–254 (YVNPQGPDGNPDPLASAFDIRDTFARM) constitute a cross-link (tryptophyl-tyrosyl-methioninium (Tyr-Met) (with W-100)). A heme b-binding site is contributed by His-269.

It belongs to the peroxidase family. Peroxidase/catalase subfamily. In terms of assembly, homodimer or homotetramer. Heme b is required as a cofactor. Formation of the three residue Trp-Tyr-Met cross-link is important for the catalase, but not the peroxidase activity of the enzyme.

The catalysed reaction is H2O2 + AH2 = A + 2 H2O. The enzyme catalyses 2 H2O2 = O2 + 2 H2O. Its function is as follows. Bifunctional enzyme with both catalase and broad-spectrum peroxidase activity. The sequence is that of Catalase-peroxidase from Jannaschia sp. (strain CCS1).